Consider the following 122-residue polypeptide: Large ribosomal subunit protein uL14 (122 aa).

Belongs to the universal ribosomal protein uL14 family. As to quaternary structure, part of the 50S ribosomal subunit. Forms a cluster with proteins L3 and L19. In the 70S ribosome, L14 and L19 interact and together make contacts with the 16S rRNA in bridges B5 and B8.

Functionally, binds to 23S rRNA. Forms part of two intersubunit bridges in the 70S ribosome. The protein is Large ribosomal subunit protein uL14 of Clostridium botulinum (strain Alaska E43 / Type E3).